A 757-amino-acid chain; its full sequence is Polyribonucleotide nucleotidyltransferase (757 aa).

Mg(2+)-binding residues include aspartate 482 and aspartate 488. The 60-residue stretch at 549–608 (PRMLSFYIDKDKISAAIGSKGKNIRSVCERSNAKIEIGDDGKVSVFATSGTEAEIAKSMM) folds into the KH domain. One can recognise an S1 motif domain in the interval 618–686 (GSIVDVKVVR…KGGCPKLSRR (69 aa)). Positions 703–714 (EERKDGPNDRDN) are enriched in basic and acidic residues. The interval 703–757 (EERKDGPNDRDNYYNNSFSRKPGGSHHKRPPRPRSGFSNRNRPKFGNNDSSSGFY) is disordered. Over residues 725 to 734 (GGSHHKRPPR) the composition is skewed to basic residues.

The protein belongs to the polyribonucleotide nucleotidyltransferase family. The cofactor is Mg(2+).

It localises to the cytoplasm. It carries out the reaction RNA(n+1) + phosphate = RNA(n) + a ribonucleoside 5'-diphosphate. In terms of biological role, involved in mRNA degradation. Catalyzes the phosphorolysis of single-stranded polyribonucleotides processively in the 3'- to 5'-direction. The polypeptide is Polyribonucleotide nucleotidyltransferase (Wolbachia sp. subsp. Drosophila simulans (strain wRi)).